A 795-amino-acid chain; its full sequence is Phenylalanine--tRNA ligase beta subunit (795 aa).

A tRNA-binding domain is found at Ala-39–Arg-148. Residues Pro-401–Asp-476 form the B5 domain. Asp-454, Asp-460, Glu-463, and Glu-464 together coordinate Mg(2+). An FDX-ACB domain is found at Ser-701–Arg-794.

This sequence belongs to the phenylalanyl-tRNA synthetase beta subunit family. Type 1 subfamily. Tetramer of two alpha and two beta subunits. It depends on Mg(2+) as a cofactor.

Its subcellular location is the cytoplasm. The catalysed reaction is tRNA(Phe) + L-phenylalanine + ATP = L-phenylalanyl-tRNA(Phe) + AMP + diphosphate + H(+). The sequence is that of Phenylalanine--tRNA ligase beta subunit from Shigella flexneri.